Here is a 391-residue protein sequence, read N- to C-terminus: Multidrug resistance protein MdtL (391 aa).

Transmembrane regions (helical) follow at residues 4-24 (FLIC…MYLV), 42-62 (IAFS…GKVA), 69-89 (PVAI…SLAE), 93-113 (LFLA…VVAF), 131-151 (LLNG…HLIM), 158-178 (SLFW…LFIL), 203-222 (FFLS…LTFV), 245-265 (ALTA…LGIF), 269-289 (TLMI…AVSP), 293-313 (VSLF…GVAM), 331-351 (LGIA…VVGI), and 356-376 (MLIG…MFVA).

This sequence belongs to the major facilitator superfamily. DHA1 family. MdtL (TC 2.A.1.2.22) subfamily.

Its subcellular location is the cell inner membrane. Its function is as follows. Confers resistance to chloramphenicol. This is Multidrug resistance protein MdtL from Escherichia coli (strain 55989 / EAEC).